Consider the following 341-residue polypeptide: D-erythrose-4-phosphate dehydrogenase (341 aa).

14 to 15 (RI) is an NAD(+) binding site. Residues 156–158 (SCT), arginine 202, 215–216 (TR), and arginine 238 contribute to the substrate site. Cysteine 157 (nucleophile) is an active-site residue. Asparagine 320 contributes to the NAD(+) binding site.

The protein belongs to the glyceraldehyde-3-phosphate dehydrogenase family. Epd subfamily. In terms of assembly, homotetramer.

It is found in the cytoplasm. It carries out the reaction D-erythrose 4-phosphate + NAD(+) + H2O = 4-phospho-D-erythronate + NADH + 2 H(+). It functions in the pathway cofactor biosynthesis; pyridoxine 5'-phosphate biosynthesis; pyridoxine 5'-phosphate from D-erythrose 4-phosphate: step 1/5. Functionally, catalyzes the NAD-dependent conversion of D-erythrose 4-phosphate to 4-phosphoerythronate. The protein is D-erythrose-4-phosphate dehydrogenase of Idiomarina loihiensis (strain ATCC BAA-735 / DSM 15497 / L2-TR).